The primary structure comprises 384 residues: N-acetyldiaminopimelate deacetylase (384 aa).

The active site involves D75. Residue E134 is the Proton acceptor of the active site.

This sequence belongs to the peptidase M20A family. N-acetyldiaminopimelate deacetylase subfamily.

The catalysed reaction is N-acetyl-(2S,6S)-2,6-diaminopimelate + H2O = (2S,6S)-2,6-diaminopimelate + acetate. The protein operates within amino-acid biosynthesis; L-lysine biosynthesis via DAP pathway; LL-2,6-diaminopimelate from (S)-tetrahydrodipicolinate (acetylase route): step 3/3. In terms of biological role, catalyzes the conversion of N-acetyl-diaminopimelate to diaminopimelate and acetate. This is N-acetyldiaminopimelate deacetylase from Lactobacillus helveticus (strain DPC 4571).